Here is a 174-residue protein sequence, read N- to C-terminus: Calcineurin subunit B (174 aa).

4 EF-hand domains span residues 21-56 (EEIE…SSNP), 60-88 (RLMD…FSGK), 90-125 (SKLD…MVGK), and 131-166 (ELQQ…KSVA). The Ca(2+) site is built by D34, D36, S38, T40, E45, D66, D68, N70, T72, E77, D103, D105, D107, Y109, E114, D144, D146, D148, R150, and E155.

This sequence belongs to the calcineurin regulatory subunit family. Composed of a catalytic subunit (A) and a regulatory subunit (B).

Functionally, regulatory subunit of calcineurin, a calcium-dependent, calmodulin stimulated protein phosphatase. Confers calcium sensitivity. In Debaryomyces hansenii (strain ATCC 36239 / CBS 767 / BCRC 21394 / JCM 1990 / NBRC 0083 / IGC 2968) (Yeast), this protein is Calcineurin subunit B (CNB1).